Here is a 501-residue protein sequence, read N- to C-terminus: Endoglucanase 8 (501 aa).

The signal sequence occupies residues 1–35 (MKPRSSRDGHNAAAAAALLLAALVLSGDVLPAVVA). The Nucleophile role is filled by Asp-95. N-linked (GlcNAc...) asparagine glycosylation is present at Asn-298. His-414 is a catalytic residue. The N-linked (GlcNAc...) asparagine glycan is linked to Asn-462. Asp-465 is a catalytic residue. N-linked (GlcNAc...) asparagine glycosylation occurs at Asn-469. Residue Glu-474 is part of the active site.

The protein belongs to the glycosyl hydrolase 9 (cellulase E) family.

Its subcellular location is the secreted. It carries out the reaction Endohydrolysis of (1-&gt;4)-beta-D-glucosidic linkages in cellulose, lichenin and cereal beta-D-glucans.. This is Endoglucanase 8 from Oryza sativa subsp. japonica (Rice).